The primary structure comprises 314 residues: MSLKIVFAGTPQFAVPTLRALIDSSHRVLAVYTQPDRPSGRGQKIMESPVKEIARQNEIPIIQPFSLRDEVEQEKLIAMNADVMVVVAYGLILPKKALNAFRLGCVNVHASLLPRWRGAAPIQRAILAGDRETGISIMQMNEGLDTGDVLAKSACVISSEDTAADLHDRLSLIGADLLLESLAKLEKGDIKLEKQDEASATYASKIQKQEALIDWRKSAVEIARQVRAFNPTPIAFTYFEGQPMRIWRATVVDEKTDFEPGVLVDADKKGISIAAGSGILRLHQLQLPGKRVCSAGDFINAHGDKLIPGKTVFG.

111–114 (SLLP) serves as a coordination point for (6S)-5,6,7,8-tetrahydrofolate.

This sequence belongs to the Fmt family.

It catalyses the reaction L-methionyl-tRNA(fMet) + (6R)-10-formyltetrahydrofolate = N-formyl-L-methionyl-tRNA(fMet) + (6S)-5,6,7,8-tetrahydrofolate + H(+). Attaches a formyl group to the free amino group of methionyl-tRNA(fMet). The formyl group appears to play a dual role in the initiator identity of N-formylmethionyl-tRNA by promoting its recognition by IF2 and preventing the misappropriation of this tRNA by the elongation apparatus. The chain is Methionyl-tRNA formyltransferase from Coxiella burnetii (strain CbuG_Q212) (Coxiella burnetii (strain Q212)).